The chain runs to 109 residues: Tetracenomycin F2 cyclase (109 aa).

As to quaternary structure, homodimer.

It carries out the reaction tetracenomycin F2 + H(+) = tetracenomycin F1 + H2O. Its pathway is antibiotic biosynthesis; tetracenomycin C biosynthesis. In terms of biological role, catalyzing the conversion of tetracenomycin F2 to tetracenomycin F1. The protein is Tetracenomycin F2 cyclase (tcmI) of Streptomyces glaucescens.